Consider the following 253-residue polypeptide: DNA repair protein RecO (253 aa).

The protein belongs to the RecO family.

In terms of biological role, involved in DNA repair and RecF pathway recombination. The sequence is that of DNA repair protein RecO from Dehalococcoides mccartyi (strain CBDB1).